The primary structure comprises 214 residues: Protein DEHYDRATION-INDUCED 19 homolog 5 (214 aa).

Ser110 carries the phosphoserine modification. The tract at residues 148–185 (PKKSKLVQPDSSSEASMEDNSLIRDSTEKDWESPSPLS) is disordered. A compositionally biased stretch (polar residues) spans 156-166 (PDSSSEASMED). The segment covering 168–179 (SLIRDSTEKDWE) has biased composition (basic and acidic residues).

It belongs to the Di19 family. In terms of processing, phosphorylated in vitro by CPK3 or CPK11. Expressed in seedlings, roots, leaves, stems, flowers and siliques.

It is found in the nucleus. In Arabidopsis thaliana (Mouse-ear cress), this protein is Protein DEHYDRATION-INDUCED 19 homolog 5 (DI19-5).